The primary structure comprises 1244 residues: Actin cytoskeleton-regulatory complex protein SLA1 (1244 aa).

SH3 domains lie at 3–68 (VFLG…IEEA) and 69–132 (PVLK…PENG). Disordered stretches follow at residues 128 to 248 (EPEN…GNHE) and 415 to 497 (DKKH…PKKS). A compositionally biased stretch (low complexity) spans 140 to 159 (APAAAEAPAATPAAAPASAA). Over residues 171 to 184 (HNDRARMMQSKEDQ) the composition is skewed to basic and acidic residues. Over residues 199–214 (ARPTATTETTDATAAA) the composition is skewed to low complexity. A compositionally biased stretch (acidic residues) spans 226 to 235 (NDNDDEEDDY). Positions 353 to 415 (KSKKRGIVQY…PAQFIEPVRD (63 aa)) constitute an SH3 3 domain. Residues 429-447 (SIKKNFTKSPSRSRSRSRS) are compositionally biased toward basic residues. Residues Ser-447, Ser-449, and Ser-454 each carry the phosphoserine modification. Glycyl lysine isopeptide (Lys-Gly) (interchain with G-Cter in ubiquitin) cross-links involve residues Lys-471 and Lys-548. The span at 471–484 (KRSRKSSLSSHKKN) shows a compositional bias: basic residues. Disordered stretches follow at residues 558 to 592 (KANDGSSSRGTDSRDSERERRRRLKEQEEKERDRR), 610 to 649 (EERSRLQEKELPPIKPPRPTSTTSVPNTTSVPPAESSNNN), and 726 to 791 (PTNA…NLLS). 2 stretches are compositionally biased toward basic and acidic residues: residues 568–592 (TDSRDSERERRRRLKEQEEKERDRR) and 610–621 (EERSRLQEKELP). The span at 629-649 (TSTTSVPNTTSVPPAESSNNN) shows a compositional bias: low complexity. Polar residues predominate over residues 726–756 (PTNATGNMFSQPDGSLNVATSPETSLPQQLL). Over residues 757–771 (PQTTSPAQTAPSTSA) the composition is skewed to low complexity. Position 799 is a phosphoserine (Ser-799). A disordered region spans residues 813–853 (KAAASTPEPNLKDLEPVKTGGTTVPAAPVSSAPVSSAPAPL). Thr-831 is subject to Phosphothreonine. Over residues 836 to 851 (VPAAPVSSAPVSSAPA) the composition is skewed to low complexity. Phosphothreonine is present on Thr-858. 3 repeat units span residues 868-874 (TGFVMMP), 877-883 (TGGDMLP), and 887-893 (TGGFVVP). Residues 868 to 1205 (TGFVMMPMIT…NTFNTGGAMQ (338 aa)) form a 16 X 7 AA approximate repeats of T-G-G-A-M-M-P region. 2 positions are modified to phosphothreonine: Thr-887 and Thr-904. 2 consecutive repeat copies span residues 923-929 (TGGAMMP) and 945-951 (TGGGLIP). Residues Thr-984 and Thr-993 each carry the phosphothreonine modification. Ser-996 is modified (phosphoserine). 5 consecutive repeat copies span residues 1003–1009 (TGGTMIP), 1020–1026 (TGGAMMT), 1031–1037 (TGSAMMP), 1048–1054 (TGGAMMP), and 1065–1071 (TGGAMMP). Residue Thr-1075 is modified to Phosphothreonine. 6 consecutive repeat copies span residues 1084 to 1090 (TGGAMIP), 1129 to 1135 (TGGAMNT), 1155 to 1161 (TGGVMQE), 1170 to 1176 (TGGAMQQ), 1185 to 1191 (TDGIMQQ), and 1200 to 1206 (TGGAMQQ).

It belongs to the SLA1 family. In terms of assembly, component of the PAN1 actin cytoskeleton-regulatory complex. Interacts with ABP1, KRE6, LAS17, LSB5, RSP5, RVS167, VPS1 and YSC84. Phosphorylated by PRK1.

It localises to the nucleus. It is found in the cell membrane. The protein localises to the endosome membrane. The protein resides in the cytoplasm. Its subcellular location is the cytoskeleton. It localises to the actin patch. Component of the PAN1 actin cytoskeleton-regulatory complex required for the internalization of endosomes during actin-coupled endocytosis. The complex links the site of endocytosis to the cell membrane-associated actin cytoskeleton. Mediates uptake of external molecules and vacuolar degradation of plasma membrane proteins. Plays a role in the proper organization of the cell membrane-associated actin cytoskeleton and promotes its destabilization. This is Actin cytoskeleton-regulatory complex protein SLA1 (SLA1) from Saccharomyces cerevisiae (strain ATCC 204508 / S288c) (Baker's yeast).